The chain runs to 109 residues: Large ribosomal subunit protein uL22 (109 aa).

Belongs to the universal ribosomal protein uL22 family. As to quaternary structure, part of the 50S ribosomal subunit.

This protein binds specifically to 23S rRNA; its binding is stimulated by other ribosomal proteins, e.g. L4, L17, and L20. It is important during the early stages of 50S assembly. It makes multiple contacts with different domains of the 23S rRNA in the assembled 50S subunit and ribosome. In terms of biological role, the globular domain of the protein is located near the polypeptide exit tunnel on the outside of the subunit, while an extended beta-hairpin is found that lines the wall of the exit tunnel in the center of the 70S ribosome. This is Large ribosomal subunit protein uL22 from Bordetella petrii (strain ATCC BAA-461 / DSM 12804 / CCUG 43448).